The primary structure comprises 746 residues: Tudor domain-containing protein krimp (746 aa).

The interval 1–310 is involved in homooligomerization; that stretch reads MNLEDISMIM…RDIYNQILKD (310 aa). Positions 311 to 489 are non-canonical tudor domain; sequence MAAFPENTIV…PAGITEDDMA (179 aa). The segment at 511-540 adopts a C3H1-type zinc-finger fold; it reads KDEQRICRHYDPKLNGCFKGNNCRFAHEPF. Positions 613–670 constitute a Tudor domain; the sequence is KPRLLDIVLALYSDGCFYRAQIIDEFPSEYMIFYVDYGNTEFVPLSCLAPCENVDSFK.

Belongs to the Tudor domain containing protein family. Homooligomerizes (via N-terminus). Component of the ping-pong piRNA processing (4P) complex consisting of krimp, aub and AGO3; a single molecule of krimp can bind both aub and AGO3 without the need for homooligomerization. Interacts (via canonical tudor domain) with aub (via N-terminus when symmetrically dimethylated on arginine residues). Interacts (via non-canonical tudor domain) with AGO3 (via N-terminus when unmethylated on arginine residues); this interaction leads to symmetrical dimethylation on AGO3 arginine residues and its subsequent dissociation from krimp. Krimp associated AGO3 is mostly free of piRNA binding and the interaction plays an important role in the loading of AGO3 with piRNAs; piRNA binding stimulates methylation of ACO3 by the csul/PRMT5 methylosome complex and promotes dissociation of the two proteins. Widely expressed in female germline cells, including differentiating germ cells in germarium and egg chambers (at protein level).

The protein localises to the cytoplasm. It is found in the perinuclear region. The protein resides in the cytoplasmic ribonucleoprotein granule. Its function is as follows. Stable structural component of the perinuclear meiotic nuage, a germline-specific subcellular membraneless ribonucleoprotein compartment involved in production of transposable element-repressing Piwi-interacting RNA (piRNA)-induced silencing complexes (piRISCs), which are essential for maintaining germline integrity during oogenesis. Scaffold component of the ping-pong piRNA processing (4P) complex that recruits the Piwi proteins aub and AGO3 to specific subregions of the nuage where it coordinates their activity in the ping-pong amplification step of secondary piRNA biogenesis. Binds methylated aub, which is associated with piRNA, and unmethylated AGO3, which is not associated with piRNA, bringing the Piwi proteins into close proximity and facilitating the loading of freshly cut piRNAs generated by aub onto AGO3. Promotes asymmetric ping-pong amplification by aub and AGO3 to bias production towards antisense piRNAs capable of silencing transposable elements. Required for symmetrical dimethylation of AGO3, probably by recruitment to the nuage where methylosome components are located; dimethylation promotes AGO3 dissociation and interaction with other tudor-domain containing proteins such as tud. Required for the recruitment of mael to the perinuclear meiotic nuage. Required for the recruitment of aub to the nuage in testes but not in ovaries. Involved in repression of long interspersed nuclear elements (LINEs) including HeT-A, I-element LINEs and possibly mst40, but not TART LINEs. In Drosophila melanogaster (Fruit fly), this protein is Tudor domain-containing protein krimp.